The primary structure comprises 145 residues: Putative transcriptional regulatory protein PYRAB13000 (145 aa).

Belongs to the Tfx family.

Its function is as follows. Putative transcriptional regulator. This Pyrococcus abyssi (strain GE5 / Orsay) protein is Putative transcriptional regulatory protein PYRAB13000.